The chain runs to 452 residues: Phosphoglucosamine mutase (452 aa).

Ser-103 serves as the catalytic Phosphoserine intermediate. Mg(2+) is bound by residues Ser-103, Asp-243, Asp-245, and Asp-247. The residue at position 103 (Ser-103) is a Phosphoserine.

This sequence belongs to the phosphohexose mutase family. The cofactor is Mg(2+). In terms of processing, activated by phosphorylation.

It carries out the reaction alpha-D-glucosamine 1-phosphate = D-glucosamine 6-phosphate. Catalyzes the conversion of glucosamine-6-phosphate to glucosamine-1-phosphate. The chain is Phosphoglucosamine mutase from Lactobacillus acidophilus (strain ATCC 700396 / NCK56 / N2 / NCFM).